Reading from the N-terminus, the 181-residue chain is MSDIKIEEKPDGLEGPGFFATSLDSVIGLARKNSLWPLPFATSCCGIEFMATMASTYDIARFGAERPSFSPRQADVLLVMGTIAKKMGPVLRHVYEQMAEPKWVVAVGACASSGGIFDTYSVLQGIDRIIPVDVYVPGCPPRPEQIIQGLMRVQDLASTESLRRRESPEYKALLAKYEIEE.

Cys-44, Cys-45, Cys-110, and Cys-139 together coordinate [4Fe-4S] cluster.

The protein belongs to the complex I 20 kDa subunit family. NDH-1 is composed of 14 different subunits. Subunits NuoB, C, D, E, F, and G constitute the peripheral sector of the complex. The cofactor is [4Fe-4S] cluster.

It localises to the cell inner membrane. The enzyme catalyses a quinone + NADH + 5 H(+)(in) = a quinol + NAD(+) + 4 H(+)(out). NDH-1 shuttles electrons from NADH, via FMN and iron-sulfur (Fe-S) centers, to quinones in the respiratory chain. The immediate electron acceptor for the enzyme in this species is believed to be a menaquinone. Couples the redox reaction to proton translocation (for every two electrons transferred, four hydrogen ions are translocated across the cytoplasmic membrane), and thus conserves the redox energy in a proton gradient. This Cytophaga hutchinsonii (strain ATCC 33406 / DSM 1761 / CIP 103989 / NBRC 15051 / NCIMB 9469 / D465) protein is NADH-quinone oxidoreductase subunit B 2.